The following is an 816-amino-acid chain: Metabotropic glutamate receptor-like protein E (816 aa).

The N-terminal stretch at 1 to 27 (MKIKIGNILKNVVILVIFSLFISKINS) is a signal peptide. Over 28-436 (EVVKPNPAKP…QVVVFDRTLN (409 aa)) the chain is Extracellular. Asn-68, Asn-311, and Asn-388 each carry an N-linked (GlcNAc...) asparagine glycan. The helical transmembrane segment at 437–457 (IVLGVITGVCVLIVIGIGSVI) threads the bilayer. Residues 458 to 469 (ALQWRKFRYSSP) lie on the Cytoplasmic side of the membrane. A helical membrane pass occupies residues 470–490 (LFCMFIIIGALMGLASVFTLL). The Extracellular segment spans residues 491-496 (PTPTTP). The chain crosses the membrane as a helical span at residues 497–517 (LCSGFPWLLGLGYVIVFGTLF). Residues 518–541 (TKTWRTWRLFSNARKFKIIRITNK) lie on the Cytoplasmic side of the membrane. The chain crosses the membrane as a helical span at residues 542-562 (FIITLVGGFVLLESIFMIIWT). At 563–590 (AVDRPIPLAEPIFKAGEAQLQCTSDSEA) the chain is on the extracellular side. A helical transmembrane segment spans residues 591-611 (WWYVFVFYKVFYILFGVFLAF). At 612 to 625 (KTRNVVDSLNESKP) the chain is on the cytoplasmic side. The chain crosses the membrane as a helical span at residues 626–646 (ITLALYNLTFVMVVAIALGFI). Residues 647 to 653 (LRDNPIA) lie on the Extracellular side of the membrane. Residues 654-674 (IIVIQTIAILLGFTVTVSVLF) form a helical membrane-spanning segment. Topologically, residues 675 to 816 (LPKVWMILSG…KKKKKKNNNK (142 aa)) are cytoplasmic. Residues 697 to 718 (DSMGRSNGNTTEAESTRGYTNK) are disordered.

It belongs to the G-protein coupled receptor 3 family.

The protein resides in the membrane. May be involved in early development in cAMP sensing and subsequent chemotactic response. Probable receptor of GABA and glutamate, leading respectively to the induction or inhibition of SDF-2 formation. The chain is Metabotropic glutamate receptor-like protein E (grlE) from Dictyostelium discoideum (Social amoeba).